Reading from the N-terminus, the 151-residue chain is UPF0178 protein PMI1258 (151 aa).

Belongs to the UPF0178 family.

The polypeptide is UPF0178 protein PMI1258 (Proteus mirabilis (strain HI4320)).